The chain runs to 171 residues: NADH-quinone oxidoreductase subunit C (171 aa).

The protein belongs to the complex I 30 kDa subunit family. In terms of assembly, NDH-1 is composed of 14 different subunits. Subunits NuoB, C, D, E, F, and G constitute the peripheral sector of the complex.

The protein resides in the cell membrane. The catalysed reaction is a quinone + NADH + 5 H(+)(in) = a quinol + NAD(+) + 4 H(+)(out). Functionally, NDH-1 shuttles electrons from NADH, via FMN and iron-sulfur (Fe-S) centers, to quinones in the respiratory chain. The immediate electron acceptor for the enzyme in this species is believed to be ubiquinone. Couples the redox reaction to proton translocation (for every two electrons transferred, four hydrogen ions are translocated across the cytoplasmic membrane), and thus conserves the redox energy in a proton gradient. The polypeptide is NADH-quinone oxidoreductase subunit C (Herpetosiphon aurantiacus (strain ATCC 23779 / DSM 785 / 114-95)).